The primary structure comprises 581 residues: MNIQKFLLKKIHRALLAITNESFFHLIQVQQSTKRKFGNYQINGLIAISKKLNIPIEEFAKKFIQFINLNDVAHTIKIEKPGFINIFLNTKWISNQINNIFSASHLGITPATPKTIVIDYSGPNVAKEMHVGHLRSTVIGDSIARVLSFLGHNVIRANHIGDWGTQFGMLIAYIEKNAQTRFLLNKTIQLSTLEHFYREAKKKYDIDPDFAELSRNYVLKLQKGDKHYRQIWKYLVDISILNNQDIYVRLNINLKKSDIIGESFYNDMLPDIVSDLKNKGLAVTSNGATVVFLENYHNKLGTPFGVIIQKKDGAYLYSTTDIACIKYRCKVLHADRIIYYIDSRQKQHLIQAWEIADKAGYIEKSVLLEHHMCGMLLGKDGKPFKTRAGNALKLKTLLDEALERARCLILSKNPNLKYTEINKLAHIISIGAIKYSELSKNRITDYIFDWNNMLNFEGNTAPYVQYACTRIFAIFKRSKQPNFQLKKNDIQLETEEEILLAICLLQFEEMIVAVSNQGAPHILCSYLYKLSVLFSSFYENCPIIKAHNTHIKYSRLKLALITMRTLKTGLNLLGIKTVRYM.

Residues 123 to 133 (PNVAKEMHVGH) carry the 'HIGH' region motif.

Belongs to the class-I aminoacyl-tRNA synthetase family. In terms of assembly, monomer.

It localises to the cytoplasm. The catalysed reaction is tRNA(Arg) + L-arginine + ATP = L-arginyl-tRNA(Arg) + AMP + diphosphate. This chain is Arginine--tRNA ligase, found in Blochmanniella pennsylvanica (strain BPEN).